A 700-amino-acid chain; its full sequence is UvrABC system protein B (700 aa).

A Helicase ATP-binding domain is found at 26–183 (SGLHRGDRIQ…RALVGIQYLR (158 aa)). ATP is bound at residue 39–46 (GVTGSGKT). Positions 92–115 (YYDYYQPEAYVPSSDTYIEKDASI) match the Beta-hairpin motif. In terms of domain architecture, Helicase C-terminal spans 430-596 (QVDDLLHEIR…GVTKSVDEVR (167 aa)). A disordered region spans residues 608–627 (REGEAPAPRRLASESAPRSR). One can recognise a UVR domain in the interval 631–666 (ETLVGELEIAMREAAVALDFEAAARLRDQLFEVRTA). The tract at residues 667–700 (LGQAPSEARGNAQAPKRPPGSAPQRRAGGGRRGR) is disordered.

This sequence belongs to the UvrB family. As to quaternary structure, forms a heterotetramer with UvrA during the search for lesions. Interacts with UvrC in an incision complex.

The protein resides in the cytoplasm. In terms of biological role, the UvrABC repair system catalyzes the recognition and processing of DNA lesions. A damage recognition complex composed of 2 UvrA and 2 UvrB subunits scans DNA for abnormalities. Upon binding of the UvrA(2)B(2) complex to a putative damaged site, the DNA wraps around one UvrB monomer. DNA wrap is dependent on ATP binding by UvrB and probably causes local melting of the DNA helix, facilitating insertion of UvrB beta-hairpin between the DNA strands. Then UvrB probes one DNA strand for the presence of a lesion. If a lesion is found the UvrA subunits dissociate and the UvrB-DNA preincision complex is formed. This complex is subsequently bound by UvrC and the second UvrB is released. If no lesion is found, the DNA wraps around the other UvrB subunit that will check the other stand for damage. The sequence is that of UvrABC system protein B from Gemmatimonas aurantiaca (strain DSM 14586 / JCM 11422 / NBRC 100505 / T-27).